The primary structure comprises 352 residues: Biotin synthase (352 aa).

Residues Asn-44 to Lys-262 form the Radical SAM core domain. Cys-59, Cys-63, and Cys-66 together coordinate [4Fe-4S] cluster. Cys-103, Cys-134, Cys-194, and Arg-266 together coordinate [2Fe-2S] cluster.

It belongs to the radical SAM superfamily. Biotin synthase family. In terms of assembly, homodimer. The cofactor is [4Fe-4S] cluster. It depends on [2Fe-2S] cluster as a cofactor.

The catalysed reaction is (4R,5S)-dethiobiotin + (sulfur carrier)-SH + 2 reduced [2Fe-2S]-[ferredoxin] + 2 S-adenosyl-L-methionine = (sulfur carrier)-H + biotin + 2 5'-deoxyadenosine + 2 L-methionine + 2 oxidized [2Fe-2S]-[ferredoxin]. It participates in cofactor biosynthesis; biotin biosynthesis; biotin from 7,8-diaminononanoate: step 2/2. Catalyzes the conversion of dethiobiotin (DTB) to biotin by the insertion of a sulfur atom into dethiobiotin via a radical-based mechanism. The sequence is that of Biotin synthase from Ectopseudomonas mendocina (strain ymp) (Pseudomonas mendocina).